A 276-amino-acid polypeptide reads, in one-letter code: Transmembrane protein 53 (276 aa).

The chain crosses the membrane as a helical span at residues 170 to 190 (LLLLAAFALVVILFHFLLAPF).

Belongs to the TMEM53 family. In terms of tissue distribution, expressed in liver (at protein level).

It localises to the nucleus outer membrane. Its function is as follows. Negatively regulates bone morphogenetic protein (BMP) signaling in osteoblast lineage cells by blocking cytoplasm-nucleus translocation of phosphorylated SMAD1/5/9 proteins. This is Transmembrane protein 53 (Tmem53) from Mus musculus (Mouse).